We begin with the raw amino-acid sequence, 965 residues long: Phosphatidylethanolamine N-methyltransferase (965 aa).

Over 1 to 82 (MDRGLSTGTN…SPSEPKNLSD (82 aa)) the chain is Lumenal. A disordered region spans residues 34 to 54 (PTVTNASNGKDKAGKTFGRTP). The chain crosses the membrane as a helical span at residues 83–103 (LVVLTILAGHIFLLWILPSGA). Topologically, residues 104-106 (KIP) are cytoplasmic. The chain crosses the membrane as a helical span at residues 107 to 127 (VFAVIYLFWRSCYNAGIGWLL). Residues 128–192 (HNQSHHKTLV…EYNTWLVFRR (65 aa)) lie on the Lumenal side of the membrane. The helical transmembrane segment at 193-213 (LVDLILMCDFASYCLFAIACS) threads the bilayer. Residues 214–220 (RHPANES) are Cytoplasmic-facing. The helical transmembrane segment at 221–241 (VLMTVIRWTSGIALVLFNLWV) threads the bilayer. At 242–274 (KLDAHRVVKDYAWYWGDFFYLIDQELTFDGVFE) the chain is on the lumenal side. Residues 275 to 295 (MAPHPMYSVGYAGYYGISLMA) traverse the membrane as a helical segment. Topologically, residues 296 to 297 (AS) are cytoplasmic. The helical transmembrane segment at 298-318 (YKVLFISIIAHAAQFAFLVLV) threads the bilayer. The Lumenal portion of the chain corresponds to 319–394 (ENPHIDKTYN…LDLHRITDTS (76 aa)). A disordered region spans residues 326 to 368 (TYNPPPPRKRTITEHDAASQRSQSPDTPNAPSVSEENVPNATT). The segment covering 344–368 (SQRSQSPDTPNAPSVSEENVPNATT) has biased composition (polar residues). A helical membrane pass occupies residues 395-415 (SILVQFLMFSLTVLTPSTPWY). Position 416 (Gln416) is a topological domain, cytoplasmic. Residues 417-437 (FLFVANAAIWRLWYSVGIGYL) form a helical membrane-spanning segment. Residues 438 to 470 (LNRQSNCKSWTRHFVKYGETPHEAWNQWKGTYH) lie on the Lumenal side of the membrane. The chain crosses the membrane as a helical span at residues 471–491 (LSMVMCYASFISAVWKMYTLP). At 492–503 (SNWGYGLAILRH) the chain is on the cytoplasmic side. The helical transmembrane segment at 504–524 (VLGAGLISLQIWTSVSIYESL) threads the bilayer. Residues 525–559 (GEFGWFYGDFFFDESPKLTYNGIYRFLNNPERVLG) lie on the Lumenal side of the membrane. Residues 560–580 (LAGVWGAVLITASGTVAFLAF) traverse the membrane as a helical segment. Over 581 to 965 (LSHILSLGFI…GATTPTESKE (385 aa)) the chain is Cytoplasmic.

It belongs to the class VI-like SAM-binding methyltransferase superfamily. CHO2 family.

It localises to the endoplasmic reticulum membrane. It carries out the reaction a 1,2-diacyl-sn-glycero-3-phosphoethanolamine + S-adenosyl-L-methionine = a 1,2-diacyl-sn-glycero-3-phospho-N-methylethanolamine + S-adenosyl-L-homocysteine + H(+). The protein operates within phospholipid metabolism; phosphatidylcholine biosynthesis. Its function is as follows. Catalyzes the first step of the methylation pathway of phosphatidylcholine biosynthesis, the SAM-dependent methylation of phosphatidylethanolamine (PE) to phosphatidylmonomethylethanolamine (PMME). The protein is Phosphatidylethanolamine N-methyltransferase of Emericella nidulans (strain FGSC A4 / ATCC 38163 / CBS 112.46 / NRRL 194 / M139) (Aspergillus nidulans).